The chain runs to 544 residues: MAKLIEFNIEARRGLEAGMNTLADAVKVTLGPKGRNVVLEKSWGAPTITNDGVSIAKEIELDDPYEKIGAELVKEVAKKTDDVAGDGTTTATVLAQAMVREGLRNVTAGANPMGLKKGIEAAVQAVSARLSDMAIDIETKDQIASTASISAADPTVGEIIAEAMDKVGKEGVITVEESNTFGLELELTEGMRFDKGYISPYFVTDTERMEAVLEDPYILIVNSKISSLKDLLPVLEKVMQSGKPLFVIAEDVEGEALAGLIVNKIRGTFKSVAVKAPGFGDRRKAMLNDIAILTGGQVISEEVGLSLDAVTLDLLGRARQVVVTKDEATIVDGAGDSEQIAGRVSQIRKEIENSDSDYDREKLQERLAKLAGGVAVIKVGAATEVELKERKHRIEDAVRNAKAAVEEGIIPGGGVALLQASKAAEIEGLEGDELTGAQIVLAACTAPLKQIAINAGLEGGVVAEKVAGLPAGQGLNAANDEYVDMVEAGIIDPAKVTRSALQNAASIAALFLTTEAVIADKPEPVKAPAGGGDMDGMGGMGGMM.

Residues 29–32 (TLGP), 86–90 (DGTTT), glycine 413, 476–478 (NAA), and aspartate 492 contribute to the ATP site. Residues 523 to 544 (EPVKAPAGGGDMDGMGGMGGMM) are disordered. Gly residues predominate over residues 529-544 (AGGGDMDGMGGMGGMM).

It belongs to the chaperonin (HSP60) family. As to quaternary structure, forms a cylinder of 14 subunits composed of two heptameric rings stacked back-to-back. Interacts with the co-chaperonin GroES.

It is found in the cytoplasm. It carries out the reaction ATP + H2O + a folded polypeptide = ADP + phosphate + an unfolded polypeptide.. In terms of biological role, together with its co-chaperonin GroES, plays an essential role in assisting protein folding. The GroEL-GroES system forms a nano-cage that allows encapsulation of the non-native substrate proteins and provides a physical environment optimized to promote and accelerate protein folding. The sequence is that of Chaperonin GroEL 1 from Cutibacterium acnes (strain DSM 16379 / KPA171202) (Propionibacterium acnes).